Here is a 371-residue protein sequence, read N- to C-terminus: Protein lifeguard 1 (371 aa).

The disordered stretch occupies residues 1 to 145; that stretch reads MSHEKSFLVS…EGPPSYYDNQ (145 aa). Positions 14–49 are enriched in pro residues; it reads YPPPNPGYPGGPQPPMPPYAQPPYPGAPYPQPPFQP. A compositionally biased stretch (low complexity) spans 84 to 98; that stretch reads YPQEGYPQGPYPQGG. Over residues 102-114 the composition is skewed to pro residues; it reads GPYPQSPFPPNPY. A run of 7 helical transmembrane segments spans residues 165 to 185, 197 to 217, 228 to 248, 253 to 273, 283 to 303, 307 to 327, and 346 to 366; these read VFLV…VFTF, VWTY…LSCC, LVAL…IASF, AVIM…IFSM, MGVL…CIFI, ILEI…LAVD, and FAAL…LTII.

It belongs to the BI1 family. LFG subfamily.

It localises to the membrane. In terms of biological role, potential apoptotic regulator. The sequence is that of Protein lifeguard 1 (GRINA) from Homo sapiens (Human).